A 206-amino-acid polypeptide reads, in one-letter code: Isochorismatase domain-containing protein 2A (206 aa).

Lys-26 carries the post-translational modification N6-succinyllysine. Residues Lys-93 and Lys-178 each carry the N6-acetyllysine; alternate modification. N6-succinyllysine; alternate occurs at positions 93 and 178. 2 positions are modified to N6-acetyllysine: Lys-182 and Lys-185.

This sequence belongs to the isochorismatase family. As to quaternary structure, interacts with CDKN2A. In terms of tissue distribution, ubiquitous. Expressed predominantly in uterus, stomach and urinary tract.

It localises to the cytoplasm. The protein resides in the nucleus. This chain is Isochorismatase domain-containing protein 2A, found in Mus musculus (Mouse).